The primary structure comprises 443 residues: ATP-dependent protease ATPase subunit HslU (443 aa).

Residues Ile18, 60-65 (GVGKTE), Asp256, Glu321, and Arg393 each bind ATP.

The protein belongs to the ClpX chaperone family. HslU subfamily. As to quaternary structure, a double ring-shaped homohexamer of HslV is capped on each side by a ring-shaped HslU homohexamer. The assembly of the HslU/HslV complex is dependent on binding of ATP.

Its subcellular location is the cytoplasm. Functionally, ATPase subunit of a proteasome-like degradation complex; this subunit has chaperone activity. The binding of ATP and its subsequent hydrolysis by HslU are essential for unfolding of protein substrates subsequently hydrolyzed by HslV. HslU recognizes the N-terminal part of its protein substrates and unfolds these before they are guided to HslV for hydrolysis. This is ATP-dependent protease ATPase subunit HslU from Salmonella arizonae (strain ATCC BAA-731 / CDC346-86 / RSK2980).